Here is a 456-residue protein sequence, read N- to C-terminus: Probable glycine dehydrogenase (decarboxylating) subunit 1 (456 aa).

The protein belongs to the GcvP family. N-terminal subunit subfamily. As to quaternary structure, the glycine cleavage system is composed of four proteins: P, T, L and H. In this organism, the P 'protein' is a heterodimer of two subunits.

It carries out the reaction N(6)-[(R)-lipoyl]-L-lysyl-[glycine-cleavage complex H protein] + glycine + H(+) = N(6)-[(R)-S(8)-aminomethyldihydrolipoyl]-L-lysyl-[glycine-cleavage complex H protein] + CO2. Its function is as follows. The glycine cleavage system catalyzes the degradation of glycine. The P protein binds the alpha-amino group of glycine through its pyridoxal phosphate cofactor; CO(2) is released and the remaining methylamine moiety is then transferred to the lipoamide cofactor of the H protein. The protein is Probable glycine dehydrogenase (decarboxylating) subunit 1 of Legionella pneumophila (strain Paris).